Here is a 219-residue protein sequence, read N- to C-terminus: Redox-sensing transcriptional repressor Rex (219 aa).

Positions Arg17–Phe56 form a DNA-binding region, H-T-H motif. Residue Gly91–Gly96 coordinates NAD(+).

The protein belongs to the transcriptional regulatory Rex family. As to quaternary structure, homodimer.

It is found in the cytoplasm. Modulates transcription in response to changes in cellular NADH/NAD(+) redox state. This Caldicellulosiruptor saccharolyticus (strain ATCC 43494 / DSM 8903 / Tp8T 6331) protein is Redox-sensing transcriptional repressor Rex.